Here is a 368-residue protein sequence, read N- to C-terminus: Flagellar P-ring protein (368 aa).

Positions 1–24 (MNSIFRKIVFAAFLLLALPQFALA) are cleaved as a signal peptide.

Belongs to the FlgI family. In terms of assembly, the basal body constitutes a major portion of the flagellar organelle and consists of four rings (L,P,S, and M) mounted on a central rod.

The protein resides in the periplasm. It is found in the bacterial flagellum basal body. Its function is as follows. Assembles around the rod to form the L-ring and probably protects the motor/basal body from shearing forces during rotation. The sequence is that of Flagellar P-ring protein from Geotalea uraniireducens (strain Rf4) (Geobacter uraniireducens).